The sequence spans 248 residues: Non-specific acid phosphatase (248 aa).

A signal peptide spans 1–20; it reads MKKLLAVFCAGAFVSTSVFA.

This sequence belongs to the class A bacterial acid phosphatase family.

The protein resides in the periplasm. The enzyme catalyses a phosphate monoester + H2O = an alcohol + phosphate. The sequence is that of Non-specific acid phosphatase (phoN) from Providencia stuartii.